We begin with the raw amino-acid sequence, 556 residues long: Putative protein SPATA31F2P (556 aa).

Disordered regions lie at residues 133 to 154 (ALKA…SGSD) and 210 to 231 (LPKT…WVSP). The segment covering 144–154 (SGGQDNDSGSD) has biased composition (polar residues).

It belongs to the SPATA31 family.

In Homo sapiens (Human), this protein is Putative protein SPATA31F2P.